Here is a 551-residue protein sequence, read N- to C-terminus: Pyrroline-5-carboxylate reductase 1 (551 aa).

The segment at 279–551 (LYTQKQQNKK…RHEVKTEQIN (273 aa)) is disordered. Low complexity-rich tracts occupy residues 282 to 298 (QKQQ…QQHQ), 306 to 342 (QQHQ…YGHQ), 383 to 415 (QQYQ…SNQR), 424 to 441 (KSPQ…QPSS), 448 to 475 (QQQQ…QQQP), 487 to 496 (QQQQPQQQQQ), and 503 to 520 (YNNN…NNYN). Residues 537–551 (YHDEKRHEVKTEQIN) are compositionally biased toward basic and acidic residues.

The protein belongs to the pyrroline-5-carboxylate reductase family. In terms of assembly, homodecamer; composed of 5 homodimers.

The catalysed reaction is L-proline + NADP(+) = (S)-1-pyrroline-5-carboxylate + NADPH + 2 H(+). It carries out the reaction L-proline + NAD(+) = (S)-1-pyrroline-5-carboxylate + NADH + 2 H(+). It functions in the pathway amino-acid biosynthesis; L-proline biosynthesis; L-proline from L-glutamate 5-semialdehyde: step 1/1. The sequence is that of Pyrroline-5-carboxylate reductase 1 (pycr1) from Dictyostelium discoideum (Social amoeba).